Reading from the N-terminus, the 147-residue chain is Hemoglobin subunit delta (147 aa).

The 145-residue stretch at 3–147 (HLTPEEKALV…VANALAHKYH (145 aa)) folds into the Globin domain. Ser-51 is modified (phosphoserine). Residues His-64 and His-93 each coordinate heme b.

It belongs to the globin family. In terms of assembly, heterotetramer of two delta chains and two alpha chains. As to expression, red blood cells.

The sequence is that of Hemoglobin subunit delta (HBD) from Trichechus manatus (Caribbean manatee).